The chain runs to 248 residues: Pyridoxine 5'-phosphate synthase (248 aa).

Residue Asn-12 coordinates 3-amino-2-oxopropyl phosphate. 14-15 (DH) contacts 1-deoxy-D-xylulose 5-phosphate. Residue Arg-23 coordinates 3-amino-2-oxopropyl phosphate. The active-site Proton acceptor is the His-48. Residues Arg-50 and His-55 each contribute to the 1-deoxy-D-xylulose 5-phosphate site. Residue Glu-75 is the Proton acceptor of the active site. Thr-105 provides a ligand contact to 1-deoxy-D-xylulose 5-phosphate. Residue His-199 is the Proton donor of the active site. 3-amino-2-oxopropyl phosphate is bound by residues Gly-200 and 221-222 (GH).

This sequence belongs to the PNP synthase family. In terms of assembly, homooctamer; tetramer of dimers.

It localises to the cytoplasm. It carries out the reaction 3-amino-2-oxopropyl phosphate + 1-deoxy-D-xylulose 5-phosphate = pyridoxine 5'-phosphate + phosphate + 2 H2O + H(+). It functions in the pathway cofactor biosynthesis; pyridoxine 5'-phosphate biosynthesis; pyridoxine 5'-phosphate from D-erythrose 4-phosphate: step 5/5. Catalyzes the complicated ring closure reaction between the two acyclic compounds 1-deoxy-D-xylulose-5-phosphate (DXP) and 3-amino-2-oxopropyl phosphate (1-amino-acetone-3-phosphate or AAP) to form pyridoxine 5'-phosphate (PNP) and inorganic phosphate. The protein is Pyridoxine 5'-phosphate synthase of Jannaschia sp. (strain CCS1).